The sequence spans 146 residues: MTVEVLFKGGYTPQRAFDGDAGFDLQSSHTAVIQPRCRQVVKTGIAIALPDGYAGFIMPRSGLASENGITLVNSPGVIDAGYRGEISVVLINTDLHQAFHISQGDRIAQLVIMPVCHASFIEVDTLPGSARGISAFGSSGRHDTRG.

Substrate contacts are provided by residues 60–62 (RSG), asparagine 73, and 77–79 (VID).

This sequence belongs to the dUTPase family. Mg(2+) is required as a cofactor.

The enzyme catalyses dUTP + H2O = dUMP + diphosphate + H(+). The protein operates within pyrimidine metabolism; dUMP biosynthesis; dUMP from dCTP (dUTP route): step 2/2. This enzyme is involved in nucleotide metabolism: it produces dUMP, the immediate precursor of thymidine nucleotides and it decreases the intracellular concentration of dUTP so that uracil cannot be incorporated into DNA. The sequence is that of Deoxyuridine 5'-triphosphate nucleotidohydrolase from Tropheryma whipplei (strain TW08/27) (Whipple's bacillus).